Here is a 501-residue protein sequence, read N- to C-terminus: MEFSFSSPLLYILYFLLFFIVRQLLKPKSNRKLPPGPRTLPIIGNLHQLRGSLPHRTLKKLSDKHGPLMHLKMGERSAIIVSDARMAKIVLHNHGLAVADRSVNTVASIMTYNSLGVTFAQYGDYLTKLRQIYTLELLSPKKVRSFYNCFEDELDVFVKSIRSQVGQPMVLYEKVSTYLYATICRTIFGSVCKEREKMIKIVKRTSLLSGTPLRMEDLFPSMRVFCRFSKTLNQLRGLLQEMDGILEDIIVEREKTTEILKEAKDDEDMLSVLLRHKWYNPSGARFRITNADIKAIIFELILAATLSVADVVEWAMVEILRHPAILKKVYDEGRGICKEKKRVTGYDVEKMEYMRLCVKESTRVHPAAPLLVPRECREDFEVDGYTVPKGAWVLTNCWAIQMDPEIWPEPEKFDPERYIRNPMDFYGSNFELIPFGTGRRGCPGILYGVTNAELLLAAMFYHFDWEIADGKKPEDIDLTENFGAGCIMKYPLTLVPHLANE.

The helical transmembrane segment at Met1 to Val21 threads the bilayer. Residue Cys442 coordinates heme.

This sequence belongs to the cytochrome P450 family. Heme is required as a cofactor.

The protein localises to the membrane. The enzyme catalyses (19E)-geissoschizine + reduced [NADPH--hemoprotein reductase] + O2 = akuammicine + formate + oxidized [NADPH--hemoprotein reductase] + H2O + H(+). The protein operates within alkaloid biosynthesis. Its function is as follows. A cytochrome P450 monooxygenase involved in the biosynthesis of strychnos monoterpene indole alkaloids (MIAs) natural products, compounds with effects on glucose absorption. Catalyzes the conversion of geissoschizine to akuammicine. In Alstonia scholaris (Dogbane), this protein is Geissoschizine oxidase.